A 487-amino-acid chain; its full sequence is 3-octaprenyl-4-hydroxybenzoate carboxy-lyase (487 aa).

Asn-172 is a binding site for Mn(2+). Prenylated FMN-binding positions include 175–177 (IYR), 189–191 (RWL), and 194–195 (RG). Position 238 (Glu-238) interacts with Mn(2+). The Proton donor role is filled by Asp-287.

It belongs to the UbiD family. Homohexamer. Prenylated FMN serves as cofactor. It depends on Mn(2+) as a cofactor.

Its subcellular location is the cell membrane. The catalysed reaction is a 4-hydroxy-3-(all-trans-polyprenyl)benzoate + H(+) = a 2-(all-trans-polyprenyl)phenol + CO2. Its pathway is cofactor biosynthesis; ubiquinone biosynthesis. In terms of biological role, catalyzes the decarboxylation of 3-octaprenyl-4-hydroxy benzoate to 2-octaprenylphenol, an intermediate step in ubiquinone biosynthesis. The chain is 3-octaprenyl-4-hydroxybenzoate carboxy-lyase from Actinobacillus pleuropneumoniae serotype 5b (strain L20).